The chain runs to 117 residues: uncharacterized protein (117 aa).

A coiled-coil region spans residues 5–50 (DKIHNTNEQITALEKKKYQIETTLLEKQRDLLKLETQQNKAKLELL).

This is an uncharacterized protein from Bacillus pumilus (Bacillus mesentericus).